A 236-amino-acid polypeptide reads, in one-letter code: Small ribosomal subunit protein uS2c (236 aa).

Belongs to the universal ribosomal protein uS2 family.

It localises to the plastid. Its subcellular location is the chloroplast. The sequence is that of Small ribosomal subunit protein uS2c (rps2) from Phaseolus vulgaris (Kidney bean).